A 498-amino-acid polypeptide reads, in one-letter code: Protein flp (498 aa).

4 helical membrane passes run 6–26 (LYFLSISIIILVAISIAIYIT), 389–409 (FNIVTVLMTTLILLAFIFSAY), 433–453 (LTLCLCIAIALILYALPYLIL), and 471–491 (LALITTLIALFSTLIVILLFL).

It is found in the cell membrane. Its precise function is unknown. Has no penicillin-binding activity and is not involved in methicillin resistance. This is Protein flp (flp) from Staphylococcus aureus (strain Mu50 / ATCC 700699).